The sequence spans 272 residues: MKKRRSNLELLLQCFYRKKVYLSVFIVLALYCVNLLIENASSEKNVYDLLMQLTEFHPLTYTIIPTYLVVLTAHFSLGKMHHYLAFRCKDKRQWYNLNVSCIAIVTTGYSVLIAFIMLMQSLFVFRFENKWSTFAVDYYTYHATFLMNYSPLVYSIATLLLLWLLLFLLGLLFYVIFIWTKSPLVSLLFVFLLNIMNAAVTLGKIDTLTPVFFTDRVSIIQYVYKFDLNQDSFPYSIFVYWIMLIAVIYLIGWLVIQRVDFESEKGEKHHAS.

6 consecutive transmembrane segments (helical) span residues 20–37 (VYLSVFIVLALYCVNLLI), 57–77 (HPLTYTIIPTYLVVLTAHFSL), 97–119 (LNVSCIAIVTTGYSVLIAFIMLM), 155–177 (SIATLLLLWLLLFLLGLLFYVIF), 184–203 (LVSLLFVFLLNIMNAAVTLG), and 234–256 (PYSIFVYWIMLIAVIYLIGWLVI).

The protein localises to the cell membrane. This is an uncharacterized protein from Halalkalibacterium halodurans (strain ATCC BAA-125 / DSM 18197 / FERM 7344 / JCM 9153 / C-125) (Bacillus halodurans).